The chain runs to 160 residues: Transcription elongation factor GreA (160 aa).

Residues 49 to 75 (SEYDEAKNDQAFTEGKILQLENKLKNA) adopt a coiled-coil conformation.

The protein belongs to the GreA/GreB family.

Its function is as follows. Necessary for efficient RNA polymerase transcription elongation past template-encoded arresting sites. The arresting sites in DNA have the property of trapping a certain fraction of elongating RNA polymerases that pass through, resulting in locked ternary complexes. Cleavage of the nascent transcript by cleavage factors such as GreA or GreB allows the resumption of elongation from the new 3'terminus. GreA releases sequences of 2 to 3 nucleotides. The sequence is that of Transcription elongation factor GreA from Clostridium botulinum (strain Eklund 17B / Type B).